Here is a 276-residue protein sequence, read N- to C-terminus: Large ribosomal subunit protein uL2 (276 aa).

Disordered stretches follow at residues 14–58 and 221–276; these read RNAS…GGGH and TRGE…KNRK. The segment covering 16-27 has biased composition (polar residues); it reads ASVSDFSELTRS. Residues 255–276 are compositionally biased toward basic residues; it reads RRPKKASNKMIVRRRPSGKNRK.

This sequence belongs to the universal ribosomal protein uL2 family. As to quaternary structure, part of the 50S ribosomal subunit. Forms a bridge to the 30S subunit in the 70S ribosome.

In terms of biological role, one of the primary rRNA binding proteins. Required for association of the 30S and 50S subunits to form the 70S ribosome, for tRNA binding and peptide bond formation. It has been suggested to have peptidyltransferase activity; this is somewhat controversial. Makes several contacts with the 16S rRNA in the 70S ribosome. This Bifidobacterium longum subsp. infantis (strain ATCC 15697 / DSM 20088 / JCM 1222 / NCTC 11817 / S12) protein is Large ribosomal subunit protein uL2.